Here is a 571-residue protein sequence, read N- to C-terminus: Hemagglutinin-neuraminidase (571 aa).

Residues 1–26 (MDRAVSRVALENEEREAKNTWRFVFR) lie on the Intravirion side of the membrane. Residues 27 to 47 (IAILLLIVITLAISAAALVYS) form a helical membrane-spanning segment. The Virion surface portion of the chain corresponds to 48–571 (MEASTPGDLV…LVEILKNDGV (524 aa)). N-linked (GlcNAc...) asparagine; by host glycosylation occurs at N119. The segment at 124 to 152 (GAPVHDPDYIGGIGKELIVDDASDVTSFY) is important for interaction with fusion/F protein. Cystine bridges form between C172–C196, C186–C247, and C238–C251. The tract at residues 234-239 (NRKSCS) is involved in neuraminidase activity. Residues N341 and N433 are each glycosylated (N-linked (GlcNAc...) asparagine; by host). 2 cysteine pairs are disulfide-bonded: C344–C461 and C455–C465. 3 N-linked (GlcNAc...) asparagine; by host glycosylation sites follow: N481, N508, and N538.

The protein belongs to the paramyxoviruses hemagglutinin-neuraminidase family. As to quaternary structure, homotetramer; composed of disulfide-linked homodimers. Interacts with F protein trimer. Interacts with host CG-1B; this interaction inhibits viral adsorption and replication rather than internalization.

It localises to the virion membrane. The protein localises to the host cell membrane. It carries out the reaction Hydrolysis of alpha-(2-&gt;3)-, alpha-(2-&gt;6)-, alpha-(2-&gt;8)- glycosidic linkages of terminal sialic acid residues in oligosaccharides, glycoproteins, glycolipids, colominic acid and synthetic substrates.. Its function is as follows. Mediates the viral entry into the host cell together with fusion/F protein. Attaches the virus to sialic acid-containing cell receptors and thereby initiates infection. Binding of HN protein to the receptor induces a conformational change that allows the F protein to trigger virion/cell membranes fusion. Neuraminidase activity ensures the efficient spread of the virus by dissociating the mature virions from the neuraminic acid containing glycoproteins. The chain is Hemagglutinin-neuraminidase (HN) from Gallus gallus (Chicken).